A 426-amino-acid chain; its full sequence is Adenylosuccinate synthetase (426 aa).

Residues G12–K18 and G40–T42 contribute to the GTP site. The Proton acceptor role is filled by D13. 2 residues coordinate Mg(2+): D13 and G40. IMP is bound by residues D13–K16, N38–H41, T125, R139, Q221, T236, and R300. H41 acts as the Proton donor in catalysis. Substrate is bound at residue T296 to R302. Residues R302, K328–D330, and A410–G412 each bind GTP.

Belongs to the adenylosuccinate synthetase family. Homodimer. The cofactor is Mg(2+).

Its subcellular location is the cytoplasm. It catalyses the reaction IMP + L-aspartate + GTP = N(6)-(1,2-dicarboxyethyl)-AMP + GDP + phosphate + 2 H(+). It functions in the pathway purine metabolism; AMP biosynthesis via de novo pathway; AMP from IMP: step 1/2. Functionally, plays an important role in the de novo pathway of purine nucleotide biosynthesis. Catalyzes the first committed step in the biosynthesis of AMP from IMP. The sequence is that of Adenylosuccinate synthetase from Syntrophomonas wolfei subsp. wolfei (strain DSM 2245B / Goettingen).